The following is a 116-amino-acid chain: Non-specific lipid-transfer protein 8 (116 aa).

A signal peptide spans 1-24 (MNVLKCLAIISVLGIFFIPRYSES). Cystine bridges form between C28-C76, C38-C53, C54-C98, and C74-C112.

This sequence belongs to the plant LTP family.

Functionally, plant non-specific lipid-transfer proteins transfer phospholipids as well as galactolipids across membranes. May play a role in wax or cutin deposition in the cell walls of expanding epidermal cells and certain secretory tissues. The sequence is that of Non-specific lipid-transfer protein 8 (LTP8) from Arabidopsis thaliana (Mouse-ear cress).